Consider the following 485-residue polypeptide: MMLLRAARVPVLGRRFLSQQQLISKHVQEVDPEMFRILSDERSRQKHSVTLIPSENFTSKAVMDLLGSEMQNKYSEGYPGERYYGGNQFIDKAESLCQARALDLYGLDPEKWGVNVQALSGAPANLYAYSAVMEVGDRLMGLDLPHGGHLSHGYQLPSGTKISYISKYFNTMPYHVNTETGIIDYDTLAMTSKLFRPKVIVAGTSAYSRKLDYARFRKIADGCGAYLLSDMAHISGLVAANVIDSPFEHSDIVTTTTHKSLRGPRGAMIFYRKGIKKVNKKTGKETPFTFDKTINFSVFPGHQGGPHNHTISALAVALKQAKTPEFVEYQKQVVSNAKAFGDELLKRGFELVSGGTDNHLLLLNLSNMGIDGARLEAILEKINIAANKNTIPGDKSALFPSGLRVGTPAMTTRGFQEQDFKKVAEYIDNAVKLSIALKSQESADAKDVRSKLNSFKQLCDQSEPVQKLAEEVSSWVGTFPVPGEL.

Lys-259 carries the N6-(pyridoxal phosphate)lysine modification.

The protein belongs to the SHMT family. In terms of assembly, homotetramer. It depends on pyridoxal 5'-phosphate as a cofactor.

It is found in the mitochondrion. It carries out the reaction (6R)-5,10-methylene-5,6,7,8-tetrahydrofolate + glycine + H2O = (6S)-5,6,7,8-tetrahydrofolate + L-serine. It participates in one-carbon metabolism; tetrahydrofolate interconversion. In terms of biological role, interconversion of serine and glycine. The polypeptide is Serine hydroxymethyltransferase, mitochondrial (SHM1) (Candida glabrata (strain ATCC 2001 / BCRC 20586 / JCM 3761 / NBRC 0622 / NRRL Y-65 / CBS 138) (Yeast)).